The sequence spans 580 residues: Cleavage stimulation factor subunit 2 (580 aa).

Serine 14 carries the phosphoserine modification. One can recognise an RRM domain in the interval 16-94 (RSVFVGNIPY…RALRVDNAAS (79 aa)). The interval 108-248 (APVIESPYGE…VNGAPPMMQA (141 aa)) is interactions with CSTF3 and SYMPK. Residue lysine 189 forms a Glycyl lysine isopeptide (Lys-Gly) (interchain with G-Cter in SUMO2) linkage. An Omega-N-methylarginine modification is found at arginine 308. Disordered regions lie at residues 311 to 331 (LPTN…DPRG) and 347 to 414 (LGPP…RGLD). Composition is skewed to basic and acidic residues over residues 363–376 (PGHE…HDMR) and 405–414 (RGGRDPRGLD). The stretch at 413–417 (LDARG) is one 1; approximate repeat. The 12 X 5 AA tandem repeats of M-E-A-R-[AG] stretch occupies residues 413–472 (LDARGMEARAMEARGLDARGLEARAMEARAMEARAMEARAMEARAMEARAMEARGMDTRG). Repeat copies occupy residues 418 to 422 (MEARA) and 423 to 427 (MEARG). A 4; approximate repeat occupies 428–432 (LDARG). The stretch at 433–437 (LEARA) is one 5; approximate repeat. Tandem repeats lie at residues 438-442 (MEARA), 443-447 (MEARA), 448-452 (MEARA), 453-457 (MEARA), 458-462 (MEARA), and 463-467 (MEARG). One copy of the 12; approximate repeat lies at 468-472 (MDTRG). Arginine 471 and arginine 478 each carry omega-N-methylarginine. The tract at residues 512–536 (MQGASMQGGSQPGGFSPGQSQVTPQ) is disordered. An interaction with RPO2TC1 region spans residues 517-580 (MQGGSQPGGF…EQIQKSTGAP (64 aa)). Phosphoserine occurs at positions 521 and 527.

As to quaternary structure, the CSTF complex is composed of CSTF1 (50 kDa subunit), CSTF2 (64 kDa subunit) and CSTF3 (77 kDa subunit). CSTF2 directly interacts with CSTF3, SYMPK and RPO2TC1. Interacts with HSF1 in heat-stressed cells. Interacts with CPSF2, CPSF3 and FIP1L1. Interacts with DDX1. In terms of tissue distribution, expressed in most somatic cell types (at protein level). Highly expressed in testis, except in meiotic spermatocytes.

It is found in the nucleus. One of the multiple factors required for polyadenylation and 3'-end cleavage of mammalian pre-mRNAs. This subunit is directly involved in the binding to pre-mRNAs. The chain is Cleavage stimulation factor subunit 2 (Cstf2) from Mus musculus (Mouse).